A 359-amino-acid chain; its full sequence is Chorismate synthase (359 aa).

Arg-48 and Arg-54 together coordinate NADP(+). FMN is bound by residues 129-131 (RSS), 241-242 (NA), Gly-285, 300-304 (KPTSS), and Arg-326.

It belongs to the chorismate synthase family. In terms of assembly, homotetramer. FMNH2 serves as cofactor.

It catalyses the reaction 5-O-(1-carboxyvinyl)-3-phosphoshikimate = chorismate + phosphate. The protein operates within metabolic intermediate biosynthesis; chorismate biosynthesis; chorismate from D-erythrose 4-phosphate and phosphoenolpyruvate: step 7/7. Its function is as follows. Catalyzes the anti-1,4-elimination of the C-3 phosphate and the C-6 proR hydrogen from 5-enolpyruvylshikimate-3-phosphate (EPSP) to yield chorismate, which is the branch point compound that serves as the starting substrate for the three terminal pathways of aromatic amino acid biosynthesis. This reaction introduces a second double bond into the aromatic ring system. The chain is Chorismate synthase from Afipia carboxidovorans (strain ATCC 49405 / DSM 1227 / KCTC 32145 / OM5) (Oligotropha carboxidovorans).